The primary structure comprises 357 residues: DNA replication and repair protein RecF (357 aa).

30 to 37 is a binding site for ATP; the sequence is GANGSGKT.

It belongs to the RecF family.

Its subcellular location is the cytoplasm. In terms of biological role, the RecF protein is involved in DNA metabolism; it is required for DNA replication and normal SOS inducibility. RecF binds preferentially to single-stranded, linear DNA. It also seems to bind ATP. This Salmonella paratyphi A (strain ATCC 9150 / SARB42) protein is DNA replication and repair protein RecF.